A 59-amino-acid polypeptide reads, in one-letter code: Embryonic testis differentiation protein (59 aa).

The segment at 1 to 28 (MDEKNPEAVPRPPEQNTELVPPKKSKSK) is disordered.

In terms of tissue distribution, specifically expressed in testis.

This Mus musculus (Mouse) protein is Embryonic testis differentiation protein.